The primary structure comprises 152 residues: Ribosome maturation factor RimP (152 aa).

Belongs to the RimP family.

The protein resides in the cytoplasm. Required for maturation of 30S ribosomal subunits. The polypeptide is Ribosome maturation factor RimP (Burkholderia multivorans (strain ATCC 17616 / 249)).